A 583-amino-acid chain; its full sequence is Threonine--tRNA ligase (583 aa).

Residues 185 to 478 form a catalytic region; the sequence is DHRKLGRELD…LVEHYGGAFP (294 aa). 3 residues coordinate Zn(2+): Cys-278, His-329, and His-455.

Belongs to the class-II aminoacyl-tRNA synthetase family. In terms of assembly, homodimer. It depends on Zn(2+) as a cofactor.

The protein localises to the cytoplasm. The enzyme catalyses tRNA(Thr) + L-threonine + ATP = L-threonyl-tRNA(Thr) + AMP + diphosphate + H(+). Its function is as follows. Catalyzes the attachment of threonine to tRNA(Thr) in a two-step reaction: L-threonine is first activated by ATP to form Thr-AMP and then transferred to the acceptor end of tRNA(Thr). Also edits incorrectly charged L-seryl-tRNA(Thr). This chain is Threonine--tRNA ligase, found in Borrelia hermsii (strain HS1 / DAH).